The sequence spans 351 residues: uncharacterized protein (351 aa).

Mn(2+)-binding residues include D215, D226, H290, E319, and E333.

It belongs to the peptidase M24B family. The cofactor is Mn(2+).

This is an uncharacterized protein from Staphylococcus haemolyticus (strain JCSC1435).